Reading from the N-terminus, the 385-residue chain is Cytochrome b (385 aa).

4 helical membrane passes run 32–52, 76–98, 113–133, and 179–199; these read FGSL…TLAM, WLVR…LHIG, TWAI…LGYV, and FFAL…MHLI. Positions 82 and 96 each coordinate heme b. Residues His183 and His197 each coordinate heme b. His202 is an a ubiquinone binding site. A run of 4 helical transmembrane segments spans residues 226–246, 290–310, 322–342, and 349–369; these read FVFK…IFVF, LLGV…PITD, LSKV…QIGA, and FIEF…VIVP.

The protein belongs to the cytochrome b family. Fungal cytochrome b-c1 complex contains 10 subunits; 3 respiratory subunits, 2 core proteins and 5 low-molecular weight proteins. Cytochrome b-c1 complex is a homodimer. Heme b serves as cofactor.

Its subcellular location is the mitochondrion inner membrane. Component of the ubiquinol-cytochrome c reductase complex (complex III or cytochrome b-c1 complex) that is part of the mitochondrial respiratory chain. The b-c1 complex mediates electron transfer from ubiquinol to cytochrome c. Contributes to the generation of a proton gradient across the mitochondrial membrane that is then used for ATP synthesis. The chain is Cytochrome b (cob) from Aspergillus terreus (strain NIH 2624 / FGSC A1156).